A 181-amino-acid polypeptide reads, in one-letter code: NAD(P)H-quinone oxidoreductase subunit I, chloroplastic (181 aa).

2 consecutive 4Fe-4S ferredoxin-type domains span residues 52-81 (GRIHFEFDKCIACEVCVRVCPINLPVVDWE) and 92-121 (KSYSIDFGVCIFCGNCVEFCPTNCLSMTEE). The [4Fe-4S] cluster site is built by C61, C64, C67, C71, C101, C104, C107, and C111.

It belongs to the complex I 23 kDa subunit family. NDH is composed of at least 16 different subunits, 5 of which are encoded in the nucleus. It depends on [4Fe-4S] cluster as a cofactor.

It localises to the plastid. The protein resides in the chloroplast thylakoid membrane. It carries out the reaction a plastoquinone + NADH + (n+1) H(+)(in) = a plastoquinol + NAD(+) + n H(+)(out). The enzyme catalyses a plastoquinone + NADPH + (n+1) H(+)(in) = a plastoquinol + NADP(+) + n H(+)(out). Its function is as follows. NDH shuttles electrons from NAD(P)H:plastoquinone, via FMN and iron-sulfur (Fe-S) centers, to quinones in the photosynthetic chain and possibly in a chloroplast respiratory chain. The immediate electron acceptor for the enzyme in this species is believed to be plastoquinone. Couples the redox reaction to proton translocation, and thus conserves the redox energy in a proton gradient. This is NAD(P)H-quinone oxidoreductase subunit I, chloroplastic from Staurastrum punctulatum (Green alga).